Reading from the N-terminus, the 349-residue chain is Phosphoribosylformylglycinamidine cyclo-ligase (349 aa).

The protein belongs to the AIR synthase family.

It is found in the cytoplasm. It carries out the reaction 2-formamido-N(1)-(5-O-phospho-beta-D-ribosyl)acetamidine + ATP = 5-amino-1-(5-phospho-beta-D-ribosyl)imidazole + ADP + phosphate + H(+). Its pathway is purine metabolism; IMP biosynthesis via de novo pathway; 5-amino-1-(5-phospho-D-ribosyl)imidazole from N(2)-formyl-N(1)-(5-phospho-D-ribosyl)glycinamide: step 2/2. The chain is Phosphoribosylformylglycinamidine cyclo-ligase from Bordetella avium (strain 197N).